Reading from the N-terminus, the 149-residue chain is Transcriptional repressor NrdR (149 aa).

Residues 3–34 (CPFCSATDTKVIDSRLVAEGHQVRRRRECTEC) fold into a zinc finger. The 91-residue stretch at 49 to 139 (PRVIKRDGSR…VYRAFEDVSE (91 aa)) folds into the ATP-cone domain.

This sequence belongs to the NrdR family. Zn(2+) is required as a cofactor.

In terms of biological role, negatively regulates transcription of bacterial ribonucleotide reductase nrd genes and operons by binding to NrdR-boxes. This Shewanella baltica (strain OS223) protein is Transcriptional repressor NrdR.